The following is a 741-amino-acid chain: NAD(P)H-quinone oxidoreductase subunit 5, chloroplastic (741 aa).

16 helical membrane passes run 9–29 (WIIP…LLLF), 40–60 (WAFQ…NLSI), 89–109 (IDPL…LVLI), 125–145 (FAYM…SNLI), 147–167 (IYIF…FWFT), 185–205 (GDFG…SFEF), 219–239 (NQVN…GAIA), 258–278 (TPIS…FLVA), 289–311 (HIMN…LALA), 327–347 (LGYM…FHLI), 354–374 (ALLF…VGYC), 396–416 (NSFL…CFWS), 425–445 (WLYS…TAFY), 549–569 (LFPI…GIPL), 605–625 (LFSV…YKPV), and 721–741 (YLFF…FLNL).

Belongs to the complex I subunit 5 family. As to quaternary structure, NDH is composed of at least 16 different subunits, 5 of which are encoded in the nucleus.

It localises to the plastid. The protein localises to the chloroplast thylakoid membrane. The enzyme catalyses a plastoquinone + NADH + (n+1) H(+)(in) = a plastoquinol + NAD(+) + n H(+)(out). It carries out the reaction a plastoquinone + NADPH + (n+1) H(+)(in) = a plastoquinol + NADP(+) + n H(+)(out). NDH shuttles electrons from NAD(P)H:plastoquinone, via FMN and iron-sulfur (Fe-S) centers, to quinones in the photosynthetic chain and possibly in a chloroplast respiratory chain. The immediate electron acceptor for the enzyme in this species is believed to be plastoquinone. Couples the redox reaction to proton translocation, and thus conserves the redox energy in a proton gradient. This chain is NAD(P)H-quinone oxidoreductase subunit 5, chloroplastic (ndhF), found in Symphyotrichum cordifolium (Heart-leaved aster).